A 133-amino-acid chain; its full sequence is Small ribosomal subunit protein uS11 (133 aa).

This sequence belongs to the universal ribosomal protein uS11 family. In terms of assembly, part of the 30S ribosomal subunit.

Its function is as follows. Located on the platform of the 30S subunit. This chain is Small ribosomal subunit protein uS11, found in Aeropyrum pernix (strain ATCC 700893 / DSM 11879 / JCM 9820 / NBRC 100138 / K1).